The chain runs to 1370 residues: DNA-directed RNA polymerase subunit beta (1370 aa).

The protein belongs to the RNA polymerase beta chain family. The RNAP catalytic core consists of 2 alpha, 1 beta, 1 beta' and 1 omega subunit. When a sigma factor is associated with the core the holoenzyme is formed, which can initiate transcription.

The enzyme catalyses RNA(n) + a ribonucleoside 5'-triphosphate = RNA(n+1) + diphosphate. Its function is as follows. DNA-dependent RNA polymerase catalyzes the transcription of DNA into RNA using the four ribonucleoside triphosphates as substrates. This chain is DNA-directed RNA polymerase subunit beta, found in Bordetella petrii (strain ATCC BAA-461 / DSM 12804 / CCUG 43448).